The primary structure comprises 331 residues: Vitamin B12 import system permease protein BtuC (331 aa).

Helical transmembrane passes span 20 to 42 (VMLAVLLVLSALYLMVGEVFLSP), 62 to 84 (LVAAMVIGAALAVSGATLQVLLG), 91 to 113 (GVLGISGGASLAMVIALFLLPVM), 117 to 136 (TVFMLAAIIGALVFTLILVG), 148 to 170 (MLLVGVALGILSGAFVTWAFYFS), 190 to 209 (SWHHHLVTLVLLPVLVWLCL), 240 to 262 (LAISILIGCAVALGGIISFVGLV), 277 to 296 (FLLPLSAFAGATLLVFSDIW), and 303 to 325 (SAELPLGVMTTTIGAPIFIWMLI).

This sequence belongs to the binding-protein-dependent transport system permease family. FecCD subfamily. As to quaternary structure, the complex is composed of two ATP-binding proteins (BtuD), two transmembrane proteins (BtuC) and a solute-binding protein (BtuF).

It is found in the cell inner membrane. Functionally, part of the ABC transporter complex BtuCDF involved in vitamin B12 import. Involved in the translocation of the substrate across the membrane. This chain is Vitamin B12 import system permease protein BtuC, found in Vibrio vulnificus (strain CMCP6).